The primary structure comprises 200 residues: Probable molybdenum cofactor guanylyltransferase (200 aa).

Residues 9 to 11, Lys-21, Asp-69, and Asp-100 contribute to the GTP site; that span reads LAG. Position 100 (Asp-100) interacts with Mg(2+).

Belongs to the MobA family. The cofactor is Mg(2+).

The protein localises to the cytoplasm. It carries out the reaction Mo-molybdopterin + GTP + H(+) = Mo-molybdopterin guanine dinucleotide + diphosphate. In terms of biological role, transfers a GMP moiety from GTP to Mo-molybdopterin (Mo-MPT) cofactor (Moco or molybdenum cofactor) to form Mo-molybdopterin guanine dinucleotide (Mo-MGD) cofactor. The chain is Probable molybdenum cofactor guanylyltransferase from Bacillus cereus (strain ATCC 10987 / NRS 248).